The following is a 311-amino-acid chain: MSVSGELSVANGKSTPPKSSISDYIALLKPRVMSLVVFTALVGLMVSPVPINPWYGFLAIICIAVGGGGAGALNMWYDADIDAVMERTKKRPIPMGKISPPKAFIFGMVLSLLSVLVMGSFINWFAAFFLAFTIFFYVVIYTIWLKRITPQNIVIGGASGAFPPMIGWAVTTGAVSLDSFLLFLIIFMWTPPHFWALSLFSSLDYEAAGIPMMPNVRGEYSTKKQILFYTVLMVLCATAPCFTGLGGVFYGIFSTILGIIFIYFAYRLWKANTHDETILMAKKTFFFSLLYLAAVFGALLIESLVRYFIDL.

Transmembrane regions (helical) follow at residues 32–52 (VMSL…VPIN), 53–73 (PWYG…AGAL), 104–124 (FIFG…FINW), 125–145 (FAAF…TIWL), 153–173 (IVIG…VTTG), 180–200 (FLLF…LSLF), 224–244 (KQIL…CFTG), 245–265 (LGGV…IYFA), and 285–305 (FFFS…ESLV).

It belongs to the UbiA prenyltransferase family. Protoheme IX farnesyltransferase subfamily.

It is found in the cell inner membrane. It catalyses the reaction heme b + (2E,6E)-farnesyl diphosphate + H2O = Fe(II)-heme o + diphosphate. It participates in porphyrin-containing compound metabolism; heme O biosynthesis; heme O from protoheme: step 1/1. In terms of biological role, converts heme B (protoheme IX) to heme O by substitution of the vinyl group on carbon 2 of heme B porphyrin ring with a hydroxyethyl farnesyl side group. The polypeptide is Protoheme IX farnesyltransferase (Bartonella tribocorum (strain CIP 105476 / IBS 506)).